A 258-amino-acid polypeptide reads, in one-letter code: Deoxyribose-phosphate aldolase (258 aa).

The active-site Proton donor/acceptor is the Asp102. The Schiff-base intermediate with acetaldehyde role is filled by Lys165. The Proton donor/acceptor role is filled by Lys199.

Belongs to the DeoC/FbaB aldolase family. DeoC type 2 subfamily.

It is found in the cytoplasm. The enzyme catalyses 2-deoxy-D-ribose 5-phosphate = D-glyceraldehyde 3-phosphate + acetaldehyde. Its pathway is carbohydrate degradation; 2-deoxy-D-ribose 1-phosphate degradation; D-glyceraldehyde 3-phosphate and acetaldehyde from 2-deoxy-alpha-D-ribose 1-phosphate: step 2/2. In terms of biological role, catalyzes a reversible aldol reaction between acetaldehyde and D-glyceraldehyde 3-phosphate to generate 2-deoxy-D-ribose 5-phosphate. In Vibrio vulnificus (strain CMCP6), this protein is Deoxyribose-phosphate aldolase.